Here is a 1186-residue protein sequence, read N- to C-terminus: ATP-dependent helicase/deoxyribonuclease subunit B (1186 aa).

Positions 1–308 (MSVKFLLGRA…AHLEKEWGKN (308 aa)) constitute a UvrD-like helicase ATP-binding domain. 8-15 (GRAGSGKT) provides a ligand contact to ATP. Positions 288–620 (SLPRFKDNPA…LVGTADRSRY (333 aa)) constitute a UvrD-like helicase C-terminal domain. Cysteine 822, cysteine 1144, cysteine 1147, and cysteine 1153 together coordinate [4Fe-4S] cluster.

Belongs to the helicase family. AddB/RexB type 1 subfamily. Heterodimer of AddA and AddB. Mg(2+) is required as a cofactor. The cofactor is [4Fe-4S] cluster.

Functionally, the heterodimer acts as both an ATP-dependent DNA helicase and an ATP-dependent, dual-direction single-stranded exonuclease. Recognizes the chi site generating a DNA molecule suitable for the initiation of homologous recombination. The AddB subunit has 5' -&gt; 3' nuclease activity but not helicase activity. The sequence is that of ATP-dependent helicase/deoxyribonuclease subunit B from Natranaerobius thermophilus (strain ATCC BAA-1301 / DSM 18059 / JW/NM-WN-LF).